We begin with the raw amino-acid sequence, 119 residues long: Thrombin-like enzyme TLBan (119 aa).

The region spanning 1 to 112 (VIGGDECNIN…YLLWIQSIIA (112 aa)) is the Peptidase S1 domain. Residues histidine 40 and aspartate 59 each act as charge relay system in the active site. Cysteine 54 and cysteine 118 are disulfide-bonded.

In terms of assembly, monomer. Post-translationally, contains both N-linked carbohydrates and sialic acid. In terms of tissue distribution, expressed by the venom gland.

The protein resides in the secreted. Its activity is regulated as follows. Strongly inhibited by PMSF and slightly inhibited by EDTA and soybean trypsin inhibitor. In terms of biological role, thrombin-like snake venom serine protease, with high clotting activity in vitro. Also has fibrinogenolytic ability, showing a fast degradation of fibrinogen Aalpha chain (FGA), a slow degradation of Bbeta chain (FGB) and no degradation of gamma chain. Also causes platelet aggregation in platelet rich plasma (PRP) and washed platelet suspension. This chain is Thrombin-like enzyme TLBan, found in Bothrocophias andianus (Andean lancehead).